A 648-amino-acid polypeptide reads, in one-letter code: Biosynthetic arginine decarboxylase (648 aa).

An N6-(pyridoxal phosphate)lysine modification is found at lysine 109. 291 to 301 serves as a coordination point for substrate; that stretch reads LDVGGGLGVDY.

Belongs to the Orn/Lys/Arg decarboxylase class-II family. SpeA subfamily. Mg(2+) is required as a cofactor. Requires pyridoxal 5'-phosphate as cofactor.

The enzyme catalyses L-arginine + H(+) = agmatine + CO2. Catalyzes the biosynthesis of agmatine from arginine. The protein is Biosynthetic arginine decarboxylase of Prochlorococcus marinus (strain SARG / CCMP1375 / SS120).